A 314-amino-acid chain; its full sequence is MGLLDSEPGSVLNVVSTALNDTVEFYRWTWSIADKRVENWPLMQSPWPTLSISTLYLLFVWLGPKWMKDREPFQMRLVLIIYNFGMVLLNLFIFRELFMGSYNAGYSYICQSVDYSNNVHEVRIAAALWWYFVSKGVEYLDTVFFILRKKNNQVSFLHVYHHCTMFTLWWIGIKWVAGGQAFFGAQLNSFIHVIMYSYYGLTAFGPWIQKYLWWKRYLTMLQLIQFHVTIGHTALSLYTDCPFPKWMHWALIAYAISFIFLFLNFYIRTYKEPKKPKAGKTAMNGISANGVSKSEKQLMIENGKKQKNGKAKGD.

N-linked (GlcNAc...) asparagine glycosylation is present at Asn-20. The next 7 helical transmembrane spans lie at 42 to 62, 78 to 98, 127 to 147, 165 to 185, 188 to 208, 217 to 237, and 247 to 267; these read LMQS…FVWL, VLII…RELF, ALWW…FFIL, MFTL…FFGA, NSFI…GPWI, YLTM…ALSL, and MHWA…NFYI. Residues 275 to 314 are disordered; it reads KPKAGKTAMNGISANGVSKSEKQLMIENGKKQKNGKAKGD. The span at 293-304 shows a compositional bias: basic and acidic residues; the sequence is KSEKQLMIENGK. The segment covering 305 to 314 has biased composition (basic residues); that stretch reads KQKNGKAKGD. The Di-lysine motif signature appears at 310–314; it reads KAKGD.

Belongs to the ELO family. ELOVL4 subfamily. Oligomer. In terms of processing, N-glycosylated. As to expression, expressed in the retina and at much lower level in the brain. Ubiquitous, highest expression in thymus, followed by testis, small intestine, ovary, and prostate. Little or no expression in heart, lung, liver, or leukocates.

It is found in the endoplasmic reticulum membrane. It carries out the reaction a very-long-chain acyl-CoA + malonyl-CoA + H(+) = a very-long-chain 3-oxoacyl-CoA + CO2 + CoA. It catalyses the reaction tetracosanoyl-CoA + malonyl-CoA + H(+) = 3-oxohexacosanoyl-CoA + CO2 + CoA. The enzyme catalyses hexacosanoyl-CoA + malonyl-CoA + H(+) = 3-oxooctacosanyol-CoA + CO2 + CoA. The catalysed reaction is octacosanoyl-CoA + malonyl-CoA + H(+) = 3-oxo-triacontanoyl-CoA + CO2 + CoA. It carries out the reaction triacontanoyl-CoA + malonyl-CoA + H(+) = 3-oxo-dotriacontanoyl-CoA + CO2 + CoA. It catalyses the reaction (19Z,22Z,25Z,28Z,31Z)-tetratriacontapentaenoyl-CoA + malonyl-CoA + H(+) = 3-oxo-(21Z,24Z,27Z,30Z,33Z)-hexatriacontapentaenoyl-CoA + CO2 + CoA. The enzyme catalyses (4Z,7Z,10Z,13Z,16Z,19Z)-docosahexaenoyl-CoA + malonyl-CoA + H(+) = 3-oxo-(6Z,9Z,12Z,15Z,18Z,21Z)-tetracosahexaenoyl-CoA + CO2 + CoA. The catalysed reaction is (7Z,10Z,13Z,16Z)-docosatetraenoyl-CoA + malonyl-CoA + H(+) = (9Z,12Z,15Z,18Z)-3-oxotetracosatetraenoyl-CoA + CO2 + CoA. It carries out the reaction (11Z,14Z,17Z,20Z,23Z)-hexacosapentaenoyl-CoA + malonyl-CoA + H(+) = 3-oxo-(13Z,16Z,19Z,22Z,25Z)-octacosapentaenoyl-CoA + CO2 + CoA. It catalyses the reaction (13Z,16Z,19Z,22Z,25Z)-octacosapentaenoyl-CoA + malonyl-CoA + H(+) = 3-oxo-(15Z,18Z,21Z,24Z,27Z)-triacontapentaenoyl-CoA + CO2 + CoA. The enzyme catalyses (15Z,18Z,21Z,24Z,27Z)-triacontapentaenoyl-CoA + malonyl-CoA + H(+) = 3-oxo-(17Z,20Z,23Z,26Z,29Z)-dotriacontapentaenoyl-CoA + CO2 + CoA. The catalysed reaction is (17Z,20Z,23Z,26Z,29Z)-dotriacontapentaenoyl-CoA + malonyl-CoA + H(+) = 3-oxo-(19Z,22Z,25Z,28Z,31Z)-tetratriacontapentaenoyl-CoA + CO2 + CoA. It carries out the reaction (21Z,24Z,27Z,30Z,33Z)-hexatriacontapentaenoyl-CoA + malonyl-CoA + H(+) = 3-oxo-(23Z,26Z,29Z,32Z,35Z)-octatriacontapentaenoyl-CoA + CO2 + CoA. It catalyses the reaction (11Z,14Z,17Z,20Z)-hexacosatetraenoyl-CoA + malonyl-CoA + H(+) = (13Z,16Z,19Z,22Z)-3-oxooctacosatetraenoyl-CoA + CO2 + CoA. The enzyme catalyses (13Z,16Z,19Z,22Z)-octacosatetraenoyl-CoA + malonyl-CoA + H(+) = 3-oxo-(15Z,18Z,21Z,24Z)-triacontatetraenoyl-CoA + CO2 + CoA. The catalysed reaction is (15Z,18Z,21Z,24Z)-triacontatetraenoyl-CoA + malonyl-CoA + H(+) = 3-oxo-(17Z,20Z,23Z,26Z)-dotriacontatetraenoyl-CoA + CO2 + CoA. It carries out the reaction (17Z,20Z,23Z,26Z)-dotriacontatetraenoyl-CoA + malonyl-CoA + H(+) = 3-oxo-(19Z,22Z,25Z,28Z)-tetratriacontatetraenoyl-CoA + CO2 + CoA. It catalyses the reaction (19Z,22Z,25Z,28Z)-tetratriacontatetraenoyl-CoA + malonyl-CoA + H(+) = 3-oxo-(21Z,24Z,27Z,30Z)-hexatriacontatetraenoyl-CoA + CO2 + CoA. The enzyme catalyses (21Z,24Z,27Z,30Z)-hexatriacontatetraenoyl-CoA + malonyl-CoA + H(+) = 3-oxo-(23Z,26Z,29Z,32Z)-octatriacontatetraenoyl-CoA + CO2 + CoA. The catalysed reaction is (6Z,9Z,12Z,15Z,18Z,21Z)-tetracosahexaenoyl-CoA + malonyl-CoA + H(+) = 3-oxo-(8Z,11Z,14Z,17Z,20Z,23Z)-hexacosahexaenoyl-CoA + CO2 + CoA. It carries out the reaction (8Z,11Z,14Z,17Z,20Z,23Z)-hexacosahexaenoyl-CoA + malonyl-CoA + H(+) = 3-oxo-(10Z,13Z,16Z,19Z,22Z,25Z)-octacosahexaenoyl-CoA + CO2 + CoA. It catalyses the reaction (10Z,13Z,16Z,19Z,22Z,25Z)-octacosahexaenoyl-CoA + malonyl-CoA + H(+) = 3-oxo-(12Z,15Z,18Z,21Z,24Z,27Z)-triacontahexaenoyl-CoA + CO2 + CoA. The enzyme catalyses (12Z,15Z,18Z,21Z,24Z,27Z)-triacontahexaenoyl-CoA + malonyl-CoA + H(+) = 3-oxo-(14Z,17Z,20Z,23Z,26Z,29Z)-dotriacontahexaenoyl-CoA + CO2 + CoA. The catalysed reaction is (14Z,17Z,20Z,23Z,26Z,29Z)-dotriacontahexaenoyl-CoA + malonyl-CoA + H(+) = 3-oxo-(16Z,19Z,22Z,25Z,28Z,31Z)-tetratriacontahexaenoyl-CoA + CO2 + CoA. It carries out the reaction (16Z,19Z,22Z,25Z,28Z,31Z)-tetratriacontahexaenoyl-CoA + malonyl-CoA + H(+) = 3-oxo-(18Z,21Z,24Z,27Z,30Z,33Z)-hexatriacontahexaenoyl-CoA + CO2 + CoA. It catalyses the reaction (9Z,12Z,15Z,18Z,21Z)-tetracosapentaenoyl-CoA + malonyl-CoA + H(+) = 3-oxo-(11Z,14Z,17Z,20Z,23Z)-hexacosapentaenoyl-CoA + CO2 + CoA. The protein operates within lipid metabolism; fatty acid biosynthesis. Catalyzes the first and rate-limiting reaction of the four reactions that constitute the long-chain fatty acids elongation cycle. This endoplasmic reticulum-bound enzymatic process allows the addition of 2 carbons to the chain of long- and very long-chain fatty acids (VLCFAs) per cycle. Condensing enzyme that catalyzes the synthesis of very long chain saturated (VLC-SFA) and polyunsaturated (PUFA) fatty acids that are involved in multiple biological processes as precursors of membrane lipids and lipid mediators. May play a critical role in early brain and skin development. The protein is Very long chain fatty acid elongase 4 of Homo sapiens (Human).